The primary structure comprises 101 residues: Large ribosomal subunit protein uL23 (101 aa).

The protein belongs to the universal ribosomal protein uL23 family. Part of the 50S ribosomal subunit. Contacts protein L29, and trigger factor when it is bound to the ribosome.

One of the early assembly proteins it binds 23S rRNA. One of the proteins that surrounds the polypeptide exit tunnel on the outside of the ribosome. Forms the main docking site for trigger factor binding to the ribosome. In Tolumonas auensis (strain DSM 9187 / NBRC 110442 / TA 4), this protein is Large ribosomal subunit protein uL23.